Here is a 469-residue protein sequence, read N- to C-terminus: Glutamate--tRNA ligase (469 aa).

The 'HIGH' region motif lies at 11 to 21 (PSPTGFIHLGN). A compositionally biased stretch (basic and acidic residues) spans 118 to 131 (GEKPRYDGTWRPEP). The tract at residues 118–138 (GEKPRYDGTWRPEPGKVLPEP) is disordered. The 'KMSKS' region motif lies at 243–247 (KMSKR). ATP is bound at residue lysine 246.

Belongs to the class-I aminoacyl-tRNA synthetase family. Glutamate--tRNA ligase type 1 subfamily. Monomer.

The protein localises to the cytoplasm. The enzyme catalyses tRNA(Glu) + L-glutamate + ATP = L-glutamyl-tRNA(Glu) + AMP + diphosphate. Catalyzes the attachment of glutamate to tRNA(Glu) in a two-step reaction: glutamate is first activated by ATP to form Glu-AMP and then transferred to the acceptor end of tRNA(Glu). The protein is Glutamate--tRNA ligase of Burkholderia vietnamiensis (strain G4 / LMG 22486) (Burkholderia cepacia (strain R1808)).